The sequence spans 104 residues: Complex III assembly factor LYRM7 (104 aa).

The protein belongs to the complex I LYR family. Interacts with UQCRFS1.

The protein localises to the mitochondrion matrix. Functionally, assembly factor required for Rieske Fe-S protein UQCRFS1 incorporation into the cytochrome b-c1 (CIII) complex. Functions as a chaperone, binding to this subunit within the mitochondrial matrix and stabilizing it prior to its translocation and insertion into the late CIII dimeric intermediate within the mitochondrial inner membrane. This Xenopus tropicalis (Western clawed frog) protein is Complex III assembly factor LYRM7 (lyrm7).